A 486-amino-acid polypeptide reads, in one-letter code: N-succinylglutamate 5-semialdehyde dehydrogenase (486 aa).

220–225 serves as a coordination point for NAD(+); it reads GSSRTG. Catalysis depends on residues glutamate 243 and cysteine 277.

It belongs to the aldehyde dehydrogenase family. AstD subfamily.

It catalyses the reaction N-succinyl-L-glutamate 5-semialdehyde + NAD(+) + H2O = N-succinyl-L-glutamate + NADH + 2 H(+). It functions in the pathway amino-acid degradation; L-arginine degradation via AST pathway; L-glutamate and succinate from L-arginine: step 4/5. In terms of biological role, catalyzes the NAD-dependent reduction of succinylglutamate semialdehyde into succinylglutamate. This chain is N-succinylglutamate 5-semialdehyde dehydrogenase, found in Shewanella woodyi (strain ATCC 51908 / MS32).